A 160-amino-acid chain; its full sequence is UPF0262 protein Oant_0325 (160 aa).

It belongs to the UPF0262 family.

The protein is UPF0262 protein Oant_0325 of Brucella anthropi (strain ATCC 49188 / DSM 6882 / CCUG 24695 / JCM 21032 / LMG 3331 / NBRC 15819 / NCTC 12168 / Alc 37) (Ochrobactrum anthropi).